The following is a 529-amino-acid chain: UDP-glycosyltransferase (529 aa).

N70 and N420 each carry an N-linked (GlcNAc...) asparagine glycan. The chain crosses the membrane as a helical span at residues 504 to 524 (LDLYLVYIALFAVPVGAVRWI).

Belongs to the glycosyltransferase 28 family.

The protein localises to the membrane. It carries out the reaction stromemycin aglycone + UDP-alpha-D-glucose = stromemycin + UDP + H(+). It participates in mycotoxin biosynthesis. UDP-glycosyltransferase; part of the gene cluster that mediates the biosynthesis of stromemycin, a depside C-glucoside with two unsaturated C9 side chains belonging to aromatic polyketide glycosides. Acts as the tailoring enzyme responsible for 3-C-glucosylation of bininalkenylresorcylic acid to yield stromemycin. The chain is UDP-glycosyltransferase from Talaromyces amestolkiae.